The chain runs to 319 residues: Pectinesterase (319 aa).

A Pyrrolidone carboxylic acid modification is found at Gln1. Substrate is bound by residues Thr83 and Gln113. The active-site Proton donor is the Asp136. An intrachain disulfide couples Cys150 to Cys170. Asp157 acts as the Nucleophile in catalysis. Arg225 and Trp227 together coordinate substrate.

This sequence belongs to the pectinesterase family.

It localises to the secreted. The protein localises to the cell wall. It carries out the reaction [(1-&gt;4)-alpha-D-galacturonosyl methyl ester](n) + n H2O = [(1-&gt;4)-alpha-D-galacturonosyl](n) + n methanol + n H(+). It functions in the pathway glycan metabolism; pectin degradation; 2-dehydro-3-deoxy-D-gluconate from pectin: step 1/5. Catalyzes the deesterification of methyl-esterified D-galactosiduronic acid units in pectic compounds. It participates in modulating cell wall during fruit ripening, cell wall extension during pollen germination, and in defense mechanisms against pathogens. The polypeptide is Pectinesterase (Daucus carota (Wild carrot)).